Consider the following 82-residue polypeptide: Large ribosomal subunit protein uL23 (82 aa).

This sequence belongs to the universal ribosomal protein uL23 family. As to quaternary structure, part of the 50S ribosomal subunit. Contacts protein L29.

Functionally, binds to 23S rRNA. One of the proteins that surrounds the polypeptide exit tunnel on the outside of the ribosome. The protein is Large ribosomal subunit protein uL23 of Methanosarcina acetivorans (strain ATCC 35395 / DSM 2834 / JCM 12185 / C2A).